We begin with the raw amino-acid sequence, 271 residues long: Formamidopyrimidine-DNA glycosylase (271 aa).

The Schiff-base intermediate with DNA role is filled by P2. Residue E3 is the Proton donor of the active site. K58 (proton donor; for beta-elimination activity) is an active-site residue. DNA-binding residues include H92, R111, and R152. The segment at 237-271 (YVYGKVQKPCRICNNIITLIRQNGRSTYFCNACQN) adopts an FPG-type zinc-finger fold. The active-site Proton donor; for delta-elimination activity is R261.

Belongs to the FPG family. In terms of assembly, monomer. Zn(2+) is required as a cofactor.

It catalyses the reaction Hydrolysis of DNA containing ring-opened 7-methylguanine residues, releasing 2,6-diamino-4-hydroxy-5-(N-methyl)formamidopyrimidine.. The enzyme catalyses 2'-deoxyribonucleotide-(2'-deoxyribose 5'-phosphate)-2'-deoxyribonucleotide-DNA = a 3'-end 2'-deoxyribonucleotide-(2,3-dehydro-2,3-deoxyribose 5'-phosphate)-DNA + a 5'-end 5'-phospho-2'-deoxyribonucleoside-DNA + H(+). In terms of biological role, involved in base excision repair of DNA damaged by oxidation or by mutagenic agents. Acts as a DNA glycosylase that recognizes and removes damaged bases. Has a preference for oxidized purines, such as 7,8-dihydro-8-oxoguanine (8-oxoG). Has AP (apurinic/apyrimidinic) lyase activity and introduces nicks in the DNA strand. Cleaves the DNA backbone by beta-delta elimination to generate a single-strand break at the site of the removed base with both 3'- and 5'-phosphates. This chain is Formamidopyrimidine-DNA glycosylase, found in Wolbachia pipientis subsp. Culex pipiens (strain wPip).